The sequence spans 100 residues: Apolipoprotein C-II (100 aa).

Positions 1–22 (MGSRFLLALFLVLLVLGCEVQA) are cleaved as a signal peptide. Residues 66–74 (SVDEKLRDM) form a lipid binding region. The interval 78 to 100 (SSAAMTTYASIFTDQILTLLKGE) is lipoprotein lipase cofactor.

The protein belongs to the apolipoprotein C2 family. Proapolipoprotein C-II is synthesized as a sialic acid containing glycoprotein which is subsequently desialylated prior to its proteolytic processing. In terms of processing, proapolipoprotein C-II, the major form found in plasma undergoes proteolytic cleavage of its N-terminal hexapeptide to generate the mature form apolipoprotein C-II, which occurs as the minor form in plasma.

It is found in the secreted. Component of chylomicrons, very low-density lipoproteins (VLDL), low-density lipoproteins (LDL), and high-density lipoproteins (HDL) in plasma. Plays an important role in lipoprotein metabolism as an activator of lipoprotein lipase. The chain is Apolipoprotein C-II (APOC2) from Ellobius talpinus (Northern mole vole).